Consider the following 175-residue polypeptide: MSYSKIPAGKDLPNDIYVAIEIPANHAPIKYEIDKDTDCLFVDRFMATPMFYPANYGFIPNTLADDGDPLDVLVVTPYPVAPGSVIRARPVGVLHMTDEAGGDAKLIAVPHDKLSVLYKDVKEYTDLPALLLEQIKHFFENYKDLEKGKWVKVEGWGNADAARAEITKAVAAFQK.

Positions 30, 44, and 56 each coordinate substrate. Residues aspartate 66, aspartate 71, and aspartate 103 each coordinate Mg(2+). Tyrosine 142 is a binding site for substrate.

The protein belongs to the PPase family. Homohexamer. It depends on Mg(2+) as a cofactor.

It localises to the cytoplasm. The catalysed reaction is diphosphate + H2O = 2 phosphate + H(+). In terms of biological role, catalyzes the hydrolysis of inorganic pyrophosphate (PPi) forming two phosphate ions. This Pseudomonas aeruginosa (strain ATCC 15692 / DSM 22644 / CIP 104116 / JCM 14847 / LMG 12228 / 1C / PRS 101 / PAO1) protein is Inorganic pyrophosphatase.